A 2167-amino-acid polypeptide reads, in one-letter code: RNA editing associated helicase 2 (2167 aa).

Residues 1-30 (MRAIRLTVACRYLGPFRSVTLSPVVLPVRL) constitute a mitochondrion transit peptide. Disordered stretches follow at residues 503–593 (RARG…DEAT) and 937–969 (ENAT…PTNV). Positions 532 to 541 (SSTQTPSSST) are enriched in low complexity. The region spanning 1024-1095 (DAKTVLQRYC…AMHALALLRR (72 aa)) is the DRBM domain. In terms of domain architecture, Helicase ATP-binding spans 1348 to 1513 (LRAISSNQIV…FGNAPIINVE (166 aa)). 1361-1368 (GTTGCGKT) is a binding site for ATP. An Important for binding to gRNA motif is present at residues 1366–1367 (GK). The DEAH box motif lies at 1460–1463 (DEIH). The Helicase C-terminal domain occupies 1585–1762 (AIDHAVRSLD…SLCLQILALD (178 aa)). The disordered stretch occupies residues 2132–2167 (IIEPCTEPKGGSSEAEKTHVNSSHTPTTSAEAGGDS). Positions 2151 to 2161 (VNSSHTPTTSA) are enriched in polar residues.

The protein belongs to the DEAD box helicase family. DEAH subfamily. As to quaternary structure, component of the REH2-associated complex (REH2C) composed of helicase REH2, associated factors H2F1 and H2F2, and mRNAs at various editing stages; the formation of the complex is RNA-independent. Within the complex, interacts with H2F1; the interaction is direct. Interacts transiently, in a RNA-dependent manner, with various editing complexes including the RNA editing core (RECC) complex, the gRNA-binding (GRBC) complex (also known as the MRB1 complex) and the RNA editing mediator (REMC) complex. Interacts with GAP1/GRBC2 via RNA forming a variant of the GRBC complex known as REH2-GRBC complex. Interacts with mitochondrial ribosomes.

Its subcellular location is the mitochondrion. It catalyses the reaction ATP + H2O = ADP + phosphate + H(+). Its function is as follows. ATP-dependent RNA helicase that unwinds RNA in a 3' to 5' direction and that plays an important role in mitochondrial mRNA editing, a process involving the addition and deletion of uridine (U) nucleotides in the pre-mRNA. As part of the RET2-containing gRNA-binding (RET2-GRBC) complex, acts as a scaffold for the assembly of mRNA-gRNA hybrids and the recruitment of the RNA editing core (RECC) complex. Regulates several steps of mRNA editing by the MRBC3010/GRBC6 containing gRNA-binding (MRBC3010-GRBC) complex including loading of unedited mRNA, editing in the first sequence block and subsequent editing progression across multiple sequence blocks. Also, regulates the RNA substrate content of the MRBC3010-GRBC complex as well as the association of this complex with mitoribosomes. The polypeptide is RNA editing associated helicase 2 (Trypanosoma brucei brucei (strain 927/4 GUTat10.1)).